We begin with the raw amino-acid sequence, 230 residues long: Demethylmenaquinone methyltransferase (230 aa).

S-adenosyl-L-methionine-binding positions include threonine 62, aspartate 80, 100 to 101 (DA), and serine 117.

This sequence belongs to the class I-like SAM-binding methyltransferase superfamily. MenG/UbiE family.

It carries out the reaction a 2-demethylmenaquinol + S-adenosyl-L-methionine = a menaquinol + S-adenosyl-L-homocysteine + H(+). Its pathway is quinol/quinone metabolism; menaquinone biosynthesis; menaquinol from 1,4-dihydroxy-2-naphthoate: step 2/2. In terms of biological role, methyltransferase required for the conversion of demethylmenaquinol (DMKH2) to menaquinol (MKH2). The sequence is that of Demethylmenaquinone methyltransferase from Mycobacterium sp. (strain KMS).